Reading from the N-terminus, the 1063-residue chain is Cobalt-zinc-cadmium resistance protein CzcA (1063 aa).

A run of 12 helical transmembrane segments spans residues 14–34 (WLVL…YNRL), 350–370 (GAVL…AALI), 371–391 (TATI…NYKI), 395–415 (LMSL…VIVE), 452–472 (LIFG…LTGV), 487–507 (ALLG…ALFI), 534–554 (LANT…CVAI), 883–903 (VVVP…FNNI), 906–926 (GLLV…ALWI), 937–957 (VGFI…LSFI), 981–1001 (PVLM…IATG), and 1013–1033 (VVIG…PVLY). The disordered stretch occupies residues 1040–1063 (DEDAEDTREPVTQTHQPDQGRQPA). Polar residues predominate over residues 1049 to 1063 (PVTQTHQPDQGRQPA).

The protein belongs to the resistance-nodulation-cell division (RND) (TC 2.A.6) family.

Its subcellular location is the cell inner membrane. In terms of biological role, has a low cation transport activity for cobalt, it is essential for the expression of cobalt, zinc, and cadmium resistance. CzcA and CzcB together would act in zinc efflux nearly as effectively as the complete CZC efflux system (CzcABC). This Cupriavidus metallidurans (strain ATCC 43123 / DSM 2839 / NBRC 102507 / CH34) (Ralstonia metallidurans) protein is Cobalt-zinc-cadmium resistance protein CzcA (czcA).